The following is a 252-amino-acid chain: Phosphate import ATP-binding protein PstB 1 (252 aa).

An ABC transporter domain is found at 6–247 (LQIRDLSVYY…PKRKETEDYI (242 aa)). Residue 38-45 (GPSGSGKS) participates in ATP binding.

This sequence belongs to the ABC transporter superfamily. Phosphate importer (TC 3.A.1.7) family. As to quaternary structure, the complex is composed of two ATP-binding proteins (PstB), two transmembrane proteins (PstC and PstA) and a solute-binding protein (PstS).

The protein resides in the cell membrane. The enzyme catalyses phosphate(out) + ATP + H2O = ADP + 2 phosphate(in) + H(+). Its function is as follows. Part of the ABC transporter complex PstSACB involved in phosphate import. Responsible for energy coupling to the transport system. The polypeptide is Phosphate import ATP-binding protein PstB 1 (Streptococcus pyogenes serotype M1).